Reading from the N-terminus, the 347-residue chain is Protein RecA (347 aa).

66–73 contributes to the ATP binding site; that stretch reads GPESSGKT.

The protein belongs to the RecA family.

Its subcellular location is the cytoplasm. Functionally, can catalyze the hydrolysis of ATP in the presence of single-stranded DNA, the ATP-dependent uptake of single-stranded DNA by duplex DNA, and the ATP-dependent hybridization of homologous single-stranded DNAs. It interacts with LexA causing its activation and leading to its autocatalytic cleavage. The chain is Protein RecA from Methylococcus capsulatus (strain ATCC 33009 / NCIMB 11132 / Bath).